We begin with the raw amino-acid sequence, 295 residues long: uncharacterized protein (295 aa).

The region spanning 151–290 (RTAVCARLSS…RAVAAAARAG (140 aa)) is the Resolvase/invertase-type recombinase catalytic domain. S159 functions as the O-(5'-phospho-DNA)-serine intermediate in the catalytic mechanism.

This is an uncharacterized protein from Mycobacterium bovis (strain ATCC BAA-935 / AF2122/97).